Consider the following 243-residue polypeptide: MAELLLGVNIDHIATLRNARGTPYPDPVQAAFVAEQAGADGITVHLREDRRHITDRDVRILRETLQTRMNLEMAVTEEMLNIACEVKPHFCCLVPEKRQEVTTEGGLDVAGQQEKIDNAVARLSQANILVSLFIDADKRQIDAAVASGAAYIEIHTGAYADAPDDETRQHEFERIRDAATYAAAKGLKVNAGHGLTYHNVLPIAALPEMHELNIGHAIIGRAVISGLKDAVAEMKSLMREARR.

Asn9 provides a ligand contact to 3-amino-2-oxopropyl phosphate. 11-12 (DH) is a binding site for 1-deoxy-D-xylulose 5-phosphate. Arg20 serves as a coordination point for 3-amino-2-oxopropyl phosphate. The active-site Proton acceptor is the His45. 1-deoxy-D-xylulose 5-phosphate-binding residues include Arg47 and His52. Residue Glu72 is the Proton acceptor of the active site. Thr102 serves as a coordination point for 1-deoxy-D-xylulose 5-phosphate. His193 functions as the Proton donor in the catalytic mechanism. Residues Gly194 and 215–216 (GH) each bind 3-amino-2-oxopropyl phosphate.

Belongs to the PNP synthase family. Homooctamer; tetramer of dimers.

Its subcellular location is the cytoplasm. It catalyses the reaction 3-amino-2-oxopropyl phosphate + 1-deoxy-D-xylulose 5-phosphate = pyridoxine 5'-phosphate + phosphate + 2 H2O + H(+). It participates in cofactor biosynthesis; pyridoxine 5'-phosphate biosynthesis; pyridoxine 5'-phosphate from D-erythrose 4-phosphate: step 5/5. Its function is as follows. Catalyzes the complicated ring closure reaction between the two acyclic compounds 1-deoxy-D-xylulose-5-phosphate (DXP) and 3-amino-2-oxopropyl phosphate (1-amino-acetone-3-phosphate or AAP) to form pyridoxine 5'-phosphate (PNP) and inorganic phosphate. This is Pyridoxine 5'-phosphate synthase from Pectobacterium atrosepticum (strain SCRI 1043 / ATCC BAA-672) (Erwinia carotovora subsp. atroseptica).